We begin with the raw amino-acid sequence, 423 residues long: Adenylosuccinate synthetase (423 aa).

GTP-binding positions include 12 to 18 (GDEGKGK) and 40 to 42 (GHT). Catalysis depends on Asp-13, which acts as the Proton acceptor. Mg(2+)-binding residues include Asp-13 and Gly-40. Residues 13 to 16 (DEGK), 38 to 41 (NAGH), Thr-129, Arg-143, Gln-224, Thr-239, and Arg-303 each bind IMP. Residue His-41 is the Proton donor of the active site. Substrate is bound at residue 299-305 (SVTGRQR). Residues Arg-305, 331–333 (KGD), and 412–414 (SVG) each bind GTP.

It belongs to the adenylosuccinate synthetase family. In terms of assembly, homodimer. It depends on Mg(2+) as a cofactor.

It is found in the cytoplasm. It carries out the reaction IMP + L-aspartate + GTP = N(6)-(1,2-dicarboxyethyl)-AMP + GDP + phosphate + 2 H(+). It functions in the pathway purine metabolism; AMP biosynthesis via de novo pathway; AMP from IMP: step 1/2. Functionally, plays an important role in the de novo pathway of purine nucleotide biosynthesis. Catalyzes the first committed step in the biosynthesis of AMP from IMP. In Flavobacterium johnsoniae (strain ATCC 17061 / DSM 2064 / JCM 8514 / BCRC 14874 / CCUG 350202 / NBRC 14942 / NCIMB 11054 / UW101) (Cytophaga johnsonae), this protein is Adenylosuccinate synthetase.